A 1477-amino-acid polypeptide reads, in one-letter code: Lysine-specific demethylase rbr-2 (1477 aa).

Positions 1-37 (MRARRQENSISTPSAPSTSTSPRKKASIGNSRSKNHG) are disordered. Residues 9 to 21 (SISTPSAPSTSTS) are compositionally biased toward low complexity. Residues 56–97 (APIYYPTEEEFSDPIEYVAKIRHEAEKFGVVKIVPPANFKPP) form the JmjN domain. The region spanning 121 to 218 (VKEKHTFIDR…HIEPFNRNLK (98 aa)) is the ARID domain. The disordered stretch occupies residues 222 to 314 (MKNDDESDDE…KAEGDDDDDE (93 aa)). Residues 246–259 (MRTEIEVPNDKTTE) show a composition bias toward basic and acidic residues. Basic residues-rich tracts occupy residues 272–283 (GRRRSKNKKASS) and 295–304 (NSTRGRKNKK). Residues 319–371 (QVFCVACNEGKDEDLLLLCDIDGCNNGRHTYCCDPVLDEVPEGEWRCPKCIES) form a PHD-type 1 zinc finger. One can recognise a JmjC domain in the interval 468–634 (QYASHAWNLN…KGRECVESYS (167 aa)). Positions 514, 517, and 602 each coordinate Fe cation. Residues 874 to 926 (IIDKLEKWMEQVEMWRNRAKDAIYREQEYSKEEIEKIIEEGDEYDIKLEEIDE) are a coiled coil. A PHD-type 2 zinc finger spans residues 1203-1257 (LEACSCLGFNKSDDSESTLTCIMCDSEFHVRCCEWSPFLEKLPEGCFLCVRCLRG). The segment at 1375–1404 (TAKRKRPSVSHKETSKKSRKRQSQASPSEY) is disordered. Residues 1411–1466 (FKSCQARACLKPYGDSVNWVMCEAGCKNWFHVICLGFTLREINDMHEYRCSSCLDH) form a PHD-type 3 zinc finger.

The protein belongs to the JARID1 histone demethylase family. Fe(2+) is required as a cofactor.

It localises to the nucleus. It carries out the reaction N(6),N(6),N(6)-trimethyl-L-lysyl(4)-[histone H3] + 3 2-oxoglutarate + 3 O2 = L-lysyl(4)-[histone H3] + 3 formaldehyde + 3 succinate + 3 CO2. Its function is as follows. Histone demethylase that specifically demethylates 'Lys-4' of histone H3, thereby playing a central role in histone code. Does not demethylate histone H3 'Lys-9', H3 'Lys-27', H3 'Lys-36', H3 'Lys-79' or H4 'Lys-20'. Demethylates trimethylated and dimethylated but not monomethylated H3 'Lys-4'. Required for normal longevity of the soma in a germline-dependent manner. Implicated in the epigenetic inheritance of lifespan over several generations. Involved in larval development and vulva formation. In Caenorhabditis elegans, this protein is Lysine-specific demethylase rbr-2 (rbr-2).